A 121-amino-acid polypeptide reads, in one-letter code: UPF0102 protein DehaBAV1_0707 (121 aa).

The protein belongs to the UPF0102 family.

The protein is UPF0102 protein DehaBAV1_0707 of Dehalococcoides mccartyi (strain ATCC BAA-2100 / JCM 16839 / KCTC 5957 / BAV1).